The sequence spans 41 residues: Photosystem I reaction center subunit IX (41 aa).

The chain crosses the membrane as a helical span at residues Tyr7–Ile27.

This sequence belongs to the PsaJ family.

The protein localises to the plastid. Its subcellular location is the chloroplast thylakoid membrane. In terms of biological role, may help in the organization of the PsaE and PsaF subunits. This is Photosystem I reaction center subunit IX from Stigeoclonium helveticum (Green alga).